The sequence spans 354 residues: S-adenosylmethionine:tRNA ribosyltransferase-isomerase (354 aa).

Belongs to the QueA family. In terms of assembly, monomer.

The protein resides in the cytoplasm. It carries out the reaction 7-aminomethyl-7-carbaguanosine(34) in tRNA + S-adenosyl-L-methionine = epoxyqueuosine(34) in tRNA + adenine + L-methionine + 2 H(+). The protein operates within tRNA modification; tRNA-queuosine biosynthesis. Its function is as follows. Transfers and isomerizes the ribose moiety from AdoMet to the 7-aminomethyl group of 7-deazaguanine (preQ1-tRNA) to give epoxyqueuosine (oQ-tRNA). This Salmonella paratyphi A (strain ATCC 9150 / SARB42) protein is S-adenosylmethionine:tRNA ribosyltransferase-isomerase.